We begin with the raw amino-acid sequence, 239 residues long: Large ribosomal subunit protein uL1 (239 aa).

It belongs to the universal ribosomal protein uL1 family. In terms of assembly, part of the 50S ribosomal subunit.

Binds directly to 23S rRNA. The L1 stalk is quite mobile in the ribosome, and is involved in E site tRNA release. In terms of biological role, protein L1 is also a translational repressor protein, it controls the translation of the L11 operon by binding to its mRNA. This is Large ribosomal subunit protein uL1 from Mycolicibacterium gilvum (strain PYR-GCK) (Mycobacterium gilvum (strain PYR-GCK)).